A 212-amino-acid polypeptide reads, in one-letter code: Redox-sensing transcriptional repressor Rex (212 aa).

The segment at residues lysine 17–phenylalanine 56 is a DNA-binding region (H-T-H motif). Glycine 91–glycine 96 provides a ligand contact to NAD(+).

Belongs to the transcriptional regulatory Rex family. In terms of assembly, homodimer.

The protein localises to the cytoplasm. Functionally, modulates transcription in response to changes in cellular NADH/NAD(+) redox state. The polypeptide is Redox-sensing transcriptional repressor Rex (Clostridium perfringens (strain ATCC 13124 / DSM 756 / JCM 1290 / NCIMB 6125 / NCTC 8237 / Type A)).